Consider the following 837-residue polypeptide: Phosphatidylinositol-glycan-specific phospholipase D (837 aa).

Residues 1 to 23 form the signal peptide; the sequence is MSAGRLWSSLLLLLPLFCSKSSS. 5 N-linked (GlcNAc...) asparagine glycosylation sites follow: N94, N267, N287, N303, and N317. 7 FG-GAP repeats span residues 364 to 425, 431 to 492, 494 to 554, 561 to 619, 629 to 689, 701 to 767, and 785 to 837; these read SPSA…GLPP, NKEG…GRLS, SPNV…RNDK, EADW…SLGK, QSTI…GATR, ALLS…TLGD, and QYVL…FSSD. N477, N496, N586, N599, and N655 each carry an N-linked (GlcNAc...) asparagine glycan.

It belongs to the GPLD1 family. Monomer. Widely expressed.

The protein localises to the secreted. The enzyme catalyses a 6-(alpha-D-glucosaminyl)-1-(1,2-diacyl-sn-glycero-3-phospho)-1D-myo-inositol + H2O = 6-(alpha-D-glucosaminyl)-1D-myo-inositol + a 1,2-diacyl-sn-glycero-3-phosphate + H(+). Its function is as follows. This protein hydrolyzes the inositol phosphate linkage in proteins anchored by phosphatidylinositol glycans (GPI-anchor) thus releasing these proteins from the membrane. In Mus musculus (Mouse), this protein is Phosphatidylinositol-glycan-specific phospholipase D (Gpld1).